We begin with the raw amino-acid sequence, 593 residues long: Aspartate--tRNA(Asp/Asn) ligase (593 aa).

Glu-182 is an L-aspartate binding site. The aspartate stretch occupies residues 206–209 (QLFK). L-aspartate is bound at residue Arg-228. ATP-binding positions include 228–230 (RDE) and Gln-237. His-455 contacts L-aspartate. Glu-489 is a binding site for ATP. Arg-496 is a binding site for L-aspartate. Position 541 to 544 (541 to 544 (GLDR)) interacts with ATP.

It belongs to the class-II aminoacyl-tRNA synthetase family. Type 1 subfamily. As to quaternary structure, homodimer.

It localises to the cytoplasm. The catalysed reaction is tRNA(Asx) + L-aspartate + ATP = L-aspartyl-tRNA(Asx) + AMP + diphosphate. Its function is as follows. Aspartyl-tRNA synthetase with relaxed tRNA specificity since it is able to aspartylate not only its cognate tRNA(Asp) but also tRNA(Asn). Reaction proceeds in two steps: L-aspartate is first activated by ATP to form Asp-AMP and then transferred to the acceptor end of tRNA(Asp/Asn). This is Aspartate--tRNA(Asp/Asn) ligase from Geotalea uraniireducens (strain Rf4) (Geobacter uraniireducens).